The sequence spans 160 residues: Gene 34 protein (160 aa).

Residues 1-11 show a composition bias toward polar residues; it reads MDSPRGISTAT. The tract at residues 1–26 is disordered; that stretch reads MDSPRGISTATGDAHAEAAVSPAAEI.

The polypeptide is Gene 34 protein (Equus caballus (Horse)).